The chain runs to 149 residues: D-aminoacyl-tRNA deacylase (149 aa).

A Gly-cisPro motif, important for rejection of L-amino acids motif is present at residues 137–138 (GP).

The protein belongs to the DTD family. Homodimer.

The protein localises to the cytoplasm. The enzyme catalyses glycyl-tRNA(Ala) + H2O = tRNA(Ala) + glycine + H(+). It carries out the reaction a D-aminoacyl-tRNA + H2O = a tRNA + a D-alpha-amino acid + H(+). In terms of biological role, an aminoacyl-tRNA editing enzyme that deacylates mischarged D-aminoacyl-tRNAs. Also deacylates mischarged glycyl-tRNA(Ala), protecting cells against glycine mischarging by AlaRS. Acts via tRNA-based rather than protein-based catalysis; rejects L-amino acids rather than detecting D-amino acids in the active site. By recycling D-aminoacyl-tRNA to D-amino acids and free tRNA molecules, this enzyme counteracts the toxicity associated with the formation of D-aminoacyl-tRNA entities in vivo and helps enforce protein L-homochirality. This is D-aminoacyl-tRNA deacylase from Syntrophus aciditrophicus (strain SB).